Reading from the N-terminus, the 127-residue chain is MTRARRQAEARGRWAEWLAMAWLVAKGYRLLDHRARTAAGEIDLVARRGEYLVFIEVKARATRAEALDSIGPRQRGRITRAASIWRAPRSSLHHLHLRYDLVLVVPGRWPQHRRAAWVPGDSARDLL.

This sequence belongs to the UPF0102 family.

This is UPF0102 protein Mmar10_3014 from Maricaulis maris (strain MCS10) (Caulobacter maris).